The following is a 117-amino-acid chain: UPF0295 protein Bsph_0336 (117 aa).

2 helical membrane-spanning segments follow: residues 13–33 (SFALALIFIGFIVMYGGIFFK) and 37–57 (ILVLIFMTLGVLCIIGSTVVY).

The protein belongs to the UPF0295 family.

The protein localises to the cell membrane. This Lysinibacillus sphaericus (strain C3-41) protein is UPF0295 protein Bsph_0336.